A 508-amino-acid chain; its full sequence is tRNA (guanine(37)-N(1))-methyltransferase (508 aa).

A mitochondrion-targeting transit peptide spans 1–53 (MKFNFWKGLWKPKSLTPTLSHRLYRRMYTPQPPLNREMTVLDRSKFTVSLNLA). H253 serves as a coordination point for S-adenosyl-L-methionine. The span at 267–284 (RERKQQERAKRENHEKST) shows a compositional bias: basic and acidic residues. A disordered region spans residues 267–291 (RERKQQERAKRENHEKSTETAVEPD). Residues 323–324 (DL), 351–352 (DG), and N402 contribute to the S-adenosyl-L-methionine site.

Belongs to the class I-like SAM-binding methyltransferase superfamily. TRM5/TYW2 family. In terms of assembly, monomer.

The protein resides in the mitochondrion matrix. Its subcellular location is the nucleus. It is found in the cytoplasm. It catalyses the reaction guanosine(37) in tRNA + S-adenosyl-L-methionine = N(1)-methylguanosine(37) in tRNA + S-adenosyl-L-homocysteine + H(+). In terms of biological role, specifically methylates the N1 position of guanosine-37 in various cytoplasmic and mitochondrial tRNAs. Methylation is not dependent on the nature of the nucleoside 5' of the target nucleoside. This is the first step in the biosynthesis of wybutosine (yW), a modified base adjacent to the anticodon of tRNAs and required for accurate decoding. This Yarrowia lipolytica (strain CLIB 122 / E 150) (Yeast) protein is tRNA (guanine(37)-N(1))-methyltransferase.